The primary structure comprises 303 residues: Taste receptor type 2 member 13 (303 aa).

The Extracellular segment spans residues 1–7 (MESALPS). Residues 8–28 (IFTLVIIAEFIIGNLSNGFIV) traverse the membrane as a helical segment. The Cytoplasmic portion of the chain corresponds to 29 to 55 (LINCIDWVSKRELSSVDKLLIILAISR). A helical membrane pass occupies residues 56–76 (IGLIWEILVSWFLALHSLAIF). The Extracellular portion of the chain corresponds to 77-85 (VSGTGLRIM). Residues 86 to 106 (IFSWIVSNHFNLWLATILSIF) traverse the membrane as a helical segment. The Cytoplasmic segment spans residues 107-128 (YLLKIASFSSPAFLYLKRRVNK). A helical transmembrane segment spans residues 129–149 (VILMILLGTLVFLFLNLIQIN). Over 150–184 (MLIKDWLDRYERNTTWNFSMSDFETFSVSVRFTMT) the chain is Extracellular. N162 and N166 each carry an N-linked (GlcNAc...) asparagine glycan. A helical transmembrane segment spans residues 185-205 (MFSLTPFTVAFISFLLLVFSL). Residues 206-232 (QKHLQKMQLNYKGHRDPRTKVHTNALK) are Cytoplasmic-facing. A helical membrane pass occupies residues 233–253 (IVISFLLFYASFFLSILISWI). Residues 254–261 (SELYQNTV) lie on the Extracellular side of the membrane. The helical transmembrane segment at 262–282 (IYMLCETIGAFYPSSHSFLLI) threads the bilayer. The Cytoplasmic portion of the chain corresponds to 283 to 303 (LGNAKLRQAFLLVAAKVWAKR).

The protein belongs to the G-protein coupled receptor T2R family.

Its subcellular location is the membrane. Receptor that may play a role in the perception of bitterness and is gustducin-linked. May play a role in sensing the chemical composition of the gastrointestinal content. The activity of this receptor may stimulate alpha gustducin, mediate PLC-beta-2 activation and lead to the gating of TRPM5. The protein is Taste receptor type 2 member 13 (TAS2R13) of Pan paniscus (Pygmy chimpanzee).